The chain runs to 325 residues: UPF0324 membrane protein Bd1437 (325 aa).

The next 8 helical transmembrane spans lie at 21-43 (IAALLCFFPFVSSAAALVLGIVL), 58-80 (YTHHLLSLSVIGLGAGMDLMVVG), 87-105 (IGYTVVGISFTLLLGMLIG), 115-137 (STLITVGTAICGGSAIAAVAPTI), 144-166 (VSVALGTVFMLNACALVIFPWIG), 211-230 (ARALWIVPVTFLIGLFYFRG), 243-260 (PWFILGFLIAAALVTWIP), and 302-324 (LQGVGLWIVVASCTLGAILIGWI).

The protein belongs to the UPF0324 family.

The protein localises to the cell membrane. In Bdellovibrio bacteriovorus (strain ATCC 15356 / DSM 50701 / NCIMB 9529 / HD100), this protein is UPF0324 membrane protein Bd1437.